The chain runs to 323 residues: Ribosomal RNA small subunit methyltransferase H (323 aa).

Residues 39 to 41 (GGY), aspartate 57, phenylalanine 84, aspartate 103, and glutamine 110 each bind S-adenosyl-L-methionine.

It belongs to the methyltransferase superfamily. RsmH family.

The protein localises to the cytoplasm. It catalyses the reaction cytidine(1402) in 16S rRNA + S-adenosyl-L-methionine = N(4)-methylcytidine(1402) in 16S rRNA + S-adenosyl-L-homocysteine + H(+). Specifically methylates the N4 position of cytidine in position 1402 (C1402) of 16S rRNA. This Gluconobacter oxydans (strain 621H) (Gluconobacter suboxydans) protein is Ribosomal RNA small subunit methyltransferase H.